We begin with the raw amino-acid sequence, 420 residues long: MKTLIARHKAGEHIGICSVCSAHPLVIEAALAFDRNSTRKVLIEATSNQVNQFGGYTGMTPADFREFVFAIANKVGFARERIILGGDHLGPNCWQQENADAAMEKSVELVKAYVRAGFSKIHLDASMSCAGDPIPLAPETVAERAAVLCLAAESVATDCQREQLSYVIGTEVPVPGGEASAIQSVHITQVEDAANTLRTHQKAFIARGLAEALTRVIAIVVQPGVEFDHSNIIHYQAQEAQALAQWIEKTKMVYEAHSTDYQTQAAYRELVRDHFAILKVGPALTFALREAVFALAQIEQELIAPENRSGCLAVIEEVMLDEPQYWKKYYRTGFHDSLLDIRYSLSDRIRYYWPHSRIKNSVETMMVNLEGVDIPLGMISQYLPKQFERIQSGELSAIPHQLIMDKIYDVLRAYRYGCAE.

This sequence belongs to the GatZ/KbaZ family. GatZ subfamily. In terms of assembly, forms a complex with GatY.

The protein operates within carbohydrate metabolism; D-tagatose 6-phosphate degradation; D-glyceraldehyde 3-phosphate and glycerone phosphate from D-tagatose 6-phosphate: step 2/2. Component of the tagatose-1,6-bisphosphate aldolase GatYZ that is required for full activity and stability of the Y subunit. Could have a chaperone-like function for the proper and stable folding of GatY. When expressed alone, GatZ does not show any aldolase activity. Is involved in the catabolism of galactitol. This is D-tagatose-1,6-bisphosphate aldolase subunit GatZ from Escherichia coli (strain SMS-3-5 / SECEC).